The following is a 120-amino-acid chain: Large ribosomal subunit protein uL18 (120 aa).

This sequence belongs to the universal ribosomal protein uL18 family. Part of the 50S ribosomal subunit; part of the 5S rRNA/L5/L18/L25 subcomplex. Contacts the 5S and 23S rRNAs.

Its function is as follows. This is one of the proteins that bind and probably mediate the attachment of the 5S RNA into the large ribosomal subunit, where it forms part of the central protuberance. In Nitrobacter winogradskyi (strain ATCC 25391 / DSM 10237 / CIP 104748 / NCIMB 11846 / Nb-255), this protein is Large ribosomal subunit protein uL18.